The primary structure comprises 499 residues: Bifunctional purine biosynthesis protein PurH (499 aa).

The MGS-like domain maps to 1-144; sequence MIKRALISVF…KNFKDVVVLT (144 aa).

Belongs to the PurH family.

It catalyses the reaction (6R)-10-formyltetrahydrofolate + 5-amino-1-(5-phospho-beta-D-ribosyl)imidazole-4-carboxamide = 5-formamido-1-(5-phospho-D-ribosyl)imidazole-4-carboxamide + (6S)-5,6,7,8-tetrahydrofolate. The enzyme catalyses IMP + H2O = 5-formamido-1-(5-phospho-D-ribosyl)imidazole-4-carboxamide. It functions in the pathway purine metabolism; IMP biosynthesis via de novo pathway; 5-formamido-1-(5-phospho-D-ribosyl)imidazole-4-carboxamide from 5-amino-1-(5-phospho-D-ribosyl)imidazole-4-carboxamide (10-formyl THF route): step 1/1. It participates in purine metabolism; IMP biosynthesis via de novo pathway; IMP from 5-formamido-1-(5-phospho-D-ribosyl)imidazole-4-carboxamide: step 1/1. The polypeptide is Bifunctional purine biosynthesis protein PurH (Clostridium botulinum (strain Langeland / NCTC 10281 / Type F)).